The sequence spans 122 residues: NLFQFGEMIFEKTGKEAVHSYAIYGCYCGWGGQGRAMDATDRCCFVHDCCYGRVNGCNPKMATYSTSFQNGDIVCGDNDLCLRAVCECDRAAAICLGQNVNTYNKNYEHYSISHCMEESEQC.

7 cysteine pairs are disulfide-bonded: cysteine 26–cysteine 115, cysteine 28–cysteine 44, cysteine 43–cysteine 95, cysteine 49–cysteine 122, cysteine 50–cysteine 88, cysteine 57–cysteine 81, and cysteine 75–cysteine 86. Residues tyrosine 27, glycine 29, and glycine 31 each contribute to the Ca(2+) site. The active site involves histidine 47. Aspartate 48 serves as a coordination point for Ca(2+). The active site involves aspartate 89.

The protein belongs to the phospholipase A2 family. Group II subfamily. D49 sub-subfamily. Heterodimer of an acidic subunit (CbIalpha or CbIbeta) and a basic subunit (CbII). The acidic subunit is non-toxic, and increases the toxicity of the basic subunit. Requires Ca(2+) as cofactor. In terms of tissue distribution, expressed by the venom gland.

The protein resides in the secreted. The catalysed reaction is a 1,2-diacyl-sn-glycero-3-phosphocholine + H2O = a 1-acyl-sn-glycero-3-phosphocholine + a fatty acid + H(+). Functionally, heterodimer: presynaptic neurotoxin. In terms of biological role, monomer: Snake venom phospholipase A2 (PLA2) is inactive towards micellar phosphatidylcholine but is weakly active towards non-micellar dithiolecithin. PLA2 catalyzes the calcium-dependent hydrolysis of the 2-acyl groups in 3-sn-phosphoglycerides. The chain is Acidic phospholipase A2 CbIalpha from Pseudocerastes fieldi (Field's horned viper).